Reading from the N-terminus, the 386-residue chain is Copper-containing nitrite reductase (386 aa).

The N-terminal stretch at 1-18 (MKRQALAAIIASMFALAA) is a signal peptide. Cysteine 19 carries the N-palmitoyl cysteine lipid modification. Cysteine 19 carries S-diacylglycerol cysteine lipidation. Plastocyanin-like domains are found at residues 97–191 (WTFD…ILVE) and 241–342 (GHVG…LKVE). Residues histidine 130, histidine 135, histidine 170, cysteine 171, histidine 179, and methionine 184 each contribute to the Cu cation site. Substrate is bound at residue histidine 135. Histidine 276 provides a ligand contact to substrate. Histidine 325 lines the Cu cation pocket. Residues 363 to 386 (GAAPAASAPAASAPAASAPAKSDY) form a disordered region. A compositionally biased stretch (low complexity) spans 364-386 (AAPAASAPAASAPAASAPAKSDY). 3 tandem repeats follow at residues 367-371 (AASAP), 372-376 (AASAP), and 377-381 (AASAP). The interval 367–381 (AASAPAASAPAASAP) is 3 X 5 AA tandem repeats of A-A-S-A-P.

This sequence belongs to the multicopper oxidase family. Homotrimer. It depends on Cu(+) as a cofactor. Requires Cu(2+) as cofactor.

It is found in the cell outer membrane. It catalyses the reaction nitric oxide + Fe(III)-[cytochrome c] + H2O = Fe(II)-[cytochrome c] + nitrite + 2 H(+). In terms of biological role, catalyzes the reduction of nitrite to nitric oxide (NO). It could be essential for growth and survival in oxygen-depleted environments. This is Copper-containing nitrite reductase (aniA) from Neisseria meningitidis serogroup A / serotype 4A (strain DSM 15465 / Z2491).